The chain runs to 274 residues: MAINPITRNKIKDYLNSFIQQQLSVYSQRSLREFQDVDSYPSSLSKDGDLKPFHASLIPASIMRLNRFERSLSTGLGSTFEECTRLIALDHHAVALRNYDIQAALDQAQWAAIDQLISTIDRGLKHQTPSLNQMLEQIQSIPLTGILETHIVRADLYIQRHDGSELFFEIKSPKPSKGQCLEVMQRLLRIYTIKQQSAVPVKAFYAMAYNPWGISRASYRSSITKKYTDFSNAVVIGQEFWSLIGEPSTYTELLEIYHEVGLAKSAEITQKLLQ.

The protein belongs to the TdeIII type II restriction endonuclease family.

The catalysed reaction is Endonucleolytic cleavage of DNA to give specific double-stranded fragments with terminal 5'-phosphates.. Functionally, a P subtype restriction enzyme that recognizes the double-stranded sequence 5'-GGWCC-3' and cleaves after G-1. This system is less active than isoschizomeric RM.HgiEI. This chain is Type II restriction enzyme HgiBI, found in Herpetosiphon aurantiacus (Herpetosiphon giganteus).